We begin with the raw amino-acid sequence, 907 residues long: Envelope glycoprotein B (907 aa).

The signal sequence occupies residues 1-24 (MESRIWCLVVCVNLCIVCLGAAVS). The Virion surface portion of the chain corresponds to 25–751 (SSSTRGTSAT…EGVATFLKNP (727 aa)). The disordered stretch occupies residues 29–62 (RGTSATHSHHSSHTTSAAHSRSGSVSQRVTSSQT). Residues 41 to 62 (HTTSAAHSRSGSVSQRVTSSQT) are compositionally biased toward low complexity. Asparagine 68, asparagine 73, and asparagine 85 each carry an N-linked (GlcNAc...) asparagine; by host glycan. Cystine bridges form between cysteine 94–cysteine 551, cysteine 111–cysteine 507, cysteine 185–cysteine 250, and cysteine 344–cysteine 391. The involved in fusion and/or binding to host membrane stretch occupies residues 152 to 158 (SYAYIHT). N-linked (GlcNAc...) asparagine; by host glycosylation occurs at asparagine 208. The segment at 237 to 244 (GSTWLYRE) is involved in fusion and/or binding to host membrane. N-linked (GlcNAc...) asparagine; by host glycosylation is found at asparagine 281, asparagine 286, asparagine 302, asparagine 341, asparagine 383, asparagine 405, asparagine 409, asparagine 417, asparagine 447, asparagine 452, asparagine 456, asparagine 466, asparagine 555, and asparagine 586. Residues cysteine 574 and cysteine 611 are joined by a disulfide bond. The hydrophobic membrane proximal region stretch occupies residues 697–749 (VEDKVVDPLPPYLKGLDDLMSGLGAAGKAVGVAIGAVGGAVASVVEGVATFLK). A helical membrane pass occupies residues 752–772 (FGAFTIILVAIAVVIITYLIY). The Intravirion segment spans residues 773 to 907 (TRQRRLCTQP…LKDSDEEENV (135 aa)). Composition is skewed to polar residues over residues 798-810 (VTSG…SLQA) and 860-877 (RAQQ…GTQD). Disordered stretches follow at residues 798–838 (VTSG…TAAP) and 857–907 (AEQR…EENV). Residues 878-887 (KGQKPNLLDR) are compositionally biased toward basic and acidic residues. The Internalization motif motif lies at 895–898 (YRHL).

The protein belongs to the herpesviridae glycoprotein B family. Homotrimer; disulfide-linked. Binds to heparan sulfate proteoglycans. Interacts with gH/gL heterodimer. A proteolytic cleavage by host furin generates two subunits that remain linked by disulfide bonds.

It localises to the virion membrane. It is found in the host cell membrane. Its subcellular location is the host endosome membrane. The protein resides in the host Golgi apparatus membrane. In terms of biological role, envelope glycoprotein that forms spikes at the surface of virion envelope. Essential for the initial attachment to heparan sulfate moieties of the host cell surface proteoglycans. Involved in fusion of viral and cellular membranes leading to virus entry into the host cell. Following initial binding to its host receptors, membrane fusion is mediated by the fusion machinery composed at least of gB and the heterodimer gH/gL. May be involved in the fusion between the virion envelope and the outer nuclear membrane during virion egress. The polypeptide is Envelope glycoprotein B (Human cytomegalovirus (strain Merlin) (HHV-5)).